Here is a 1860-residue protein sequence, read N- to C-terminus: Probable helicase with zinc finger domain (1860 aa).

A C3H1-type zinc finger spans residues 168-196; that stretch reads SEEYTLCKRFLEQGLCRYGAQCTSAHSQE. Position 661–668 (661–668) interacts with ATP; it reads GPYGTGKT. A DEAA box motif is present at residues 787–790; that stretch reads DEAA. 6 disordered regions span residues 1106–1136, 1158–1177, 1286–1317, 1556–1604, 1641–1709, and 1749–1860; these read RSQHPPQQGPGKHQHSPPKAKGQLANHTEPF, TPPGAGAPASGKSPSPVQRL, ERKAPELKEKQGDLESVQNKSPEPQSNMGFPA, IQPR…PPDH, RQDP…RYPS, and MSEE…TYFK. The span at 1107–1116 shows a compositional bias: low complexity; sequence SQHPPQQGPG. Residues 1286-1298 are compositionally biased toward basic and acidic residues; that stretch reads ERKAPELKEKQGD. Over residues 1301-1313 the composition is skewed to polar residues; the sequence is SVQNKSPEPQSNM. A compositionally biased stretch (low complexity) spans 1641-1660; the sequence is RQDPGPLQHQQQKQQLQAPQ. Pro residues-rich tracts occupy residues 1760-1769 and 1783-1794; these read QPPPPPPPHP and PLLPSKQTPPDP. Low complexity predominate over residues 1847–1860; that stretch reads GSSNSSNGYYTYFK.

It belongs to the DNA2/NAM7 helicase family.

The protein localises to the nucleus. Its function is as follows. May act as a helicase. This Danio rerio (Zebrafish) protein is Probable helicase with zinc finger domain (helz).